The sequence spans 2212 residues: Nonribosomal peptide synthetase ftmPS (2212 aa).

The tract at residues 74–473 is adenylation 1; sequence TYAELDSLSD…IEHHLQQTLP (400 aa). In terms of domain architecture, Carrier 1 spans 592-669; that stretch reads PPSTLKETTI…EQSQRAGLIQ (78 aa). Residue S629 is modified to O-(pantetheine 4'-phosphoryl)serine. The segment at 708 to 973 is condensation 1; the sequence is EDIYPCTALQ…IATVPLRIRV (266 aa). The tract at residues 1167–1564 is adenylation 2; sequence TYRELWAHSS…LSAVEASLMR (398 aa). Positions 1678 to 1757 constitute a Carrier 2 domain; the sequence is PMSDDNERRL…QFRHLITEDD (80 aa). Residue S1715 is modified to O-(pantetheine 4'-phosphoryl)serine. Residues 1815 to 2070 are condensation 2; that stretch reads HFQFDLSGAI…CTNYIPYRLS (256 aa).

This sequence belongs to the NRP synthetase family.

It catalyses the reaction L-proline + L-tryptophan + 2 ATP = brevianamide F + 2 AMP + 2 diphosphate + 2 H(+). The protein operates within mycotoxin biosynthesis. Its function is as follows. Nonribosomal peptide synthetase; part of the gene cluster that mediates the biosynthesis of fumitremorgins, indole alkaloids that carry not only intriguing chemical structures, but also interesting biological and pharmacological activities. The biosynthesis of fumitremorgin-type alkaloids begins by condensation of the two amino acids L-tryptophan and L-proline to brevianamide F, catalyzed by the non-ribosomal peptide synthetase ftmPS/ftmA. Brevianamide F is then prenylated by the prenyltransferase ftmPT1/ftmB in the presence of dimethylallyl diphosphate, resulting in the formation of tryprostatin B. The three cytochrome P450 monooxygenases, ftmP450-1/ftmC, ftmP450-2/ftmE and ftmP450-3/FtmG, are responsible for the conversion of tryprostatin B to 6-hydroxytryprostatin B, tryprostatin A to fumitremorgin C and fumitremorgin C to 12,13-dihydroxyfumitremorgin C, respectively. The putative methyltransferase ftmMT/ftmD is expected for the conversion of 6-hydroxytryprostatin B to tryprostatin A. FtmPT2/FtmH catalyzes the prenylation of 12,13-dihydroxyfumitre-morgin C in the presence of dimethylallyl diphosphate, resulting in the formation of fumitremorgin B. Fumitremorgin B is further converted to verruculogen by ftmOx1/ftmF via the insertion of an endoperoxide bond between the two prenyl moieties. Finally, verruculogen is further converted to fumitremorgin A by the verruculogen prenyltransferase ftmPT3. The sequence is that of Nonribosomal peptide synthetase ftmPS (ftmPS) from Neosartorya fischeri (strain ATCC 1020 / DSM 3700 / CBS 544.65 / FGSC A1164 / JCM 1740 / NRRL 181 / WB 181) (Aspergillus fischerianus).